The sequence spans 245 residues: tRNA1(Val) (adenine(37)-N6)-methyltransferase (245 aa).

It belongs to the methyltransferase superfamily. tRNA (adenine-N(6)-)-methyltransferase family.

The protein resides in the cytoplasm. The catalysed reaction is adenosine(37) in tRNA1(Val) + S-adenosyl-L-methionine = N(6)-methyladenosine(37) in tRNA1(Val) + S-adenosyl-L-homocysteine + H(+). In terms of biological role, specifically methylates the adenine in position 37 of tRNA(1)(Val) (anticodon cmo5UAC). The protein is tRNA1(Val) (adenine(37)-N6)-methyltransferase of Klebsiella pneumoniae subsp. pneumoniae (strain ATCC 700721 / MGH 78578).